The following is a 237-amino-acid chain: Synapse differentiation-inducing gene protein 1-like (237 aa).

Disordered stretches follow at residues 1 to 23 (MESLSELQNPLLPRSPTHLHRPY), 84 to 111 (AGSCETSFTEAREPLAGPAEEGSEPGQA), and 127 to 148 (ELQGQEDSQEEESDGTSSESEC). The Extracellular segment spans residues 1-161 (MESLSELQNP…FLTLPPRDHL (161 aa)). Residues 129 to 148 (QGQEDSQEEESDGTSSESEC) show a composition bias toward acidic residues. A helical membrane pass occupies residues 162–182 (GLTLFSMLCCFWPLGIAAFYF). The Cytoplasmic portion of the chain corresponds to 183–204 (SQGTSKAISKGDFRLASTTSRR). The chain crosses the membrane as a helical span at residues 205–225 (ALFLATLSIAVGAGLYVAVVV). The Extracellular portion of the chain corresponds to 226–237 (ALAAYMSQNGHG).

This sequence belongs to the CD225/Dispanin family. As to expression, expression is restricted to the caudate-putamen. Down-regulated in R6/2 transgenic mice, a model for Huntington disease.

The protein localises to the membrane. It localises to the golgi apparatus. It is found in the cis-Golgi network. The sequence is that of Synapse differentiation-inducing gene protein 1-like (Syndig1l) from Mus musculus (Mouse).